The sequence spans 227 residues: GTPase ERas (227 aa).

Residues 1-19 (MALPTKSSILDLSSGTPCT) are compositionally biased toward polar residues. Residues 1–25 (MALPTKSSILDLSSGTPCTRSPEES) are disordered. Residue 48-55 (GASGVGKS) participates in GTP binding. An Effector region motif is present at residues 70–78 (HDPTIQDSY). GTP is bound by residues 95-99 (DTSGQ) and 151-154 (NKCD). Residues Cys220 and Cys222 are each lipidated (S-palmitoyl cysteine). The residue at position 224 (Cys224) is a Cysteine methyl ester. Residue Cys224 is the site of S-farnesyl cysteine attachment. The propeptide at 225 to 227 (SVA) is removed in mature form.

Belongs to the small GTPase superfamily. Ras family. As to quaternary structure, interacts with PIK3CD. Expressed in several undifferentiated mouse embryonic stem cell lines.

Its subcellular location is the cell membrane. The catalysed reaction is GTP + H2O = GDP + phosphate + H(+). With respect to regulation, alternates between an inactive form bound to GDP and an active form bound to GTP. Activated by a guanine nucleotide-exchange factor (GEF) and inactivated by a GTPase-activating protein (GAP). In terms of biological role, ras proteins bind GDP/GTP and possess intrinsic GTPase activity. Plays an important role in the tumor-like growth properties of embryonic stem cells. The polypeptide is GTPase ERas (Eras) (Mus musculus (Mouse)).